Reading from the N-terminus, the 247-residue chain is Carboxy-S-adenosyl-L-methionine synthase (247 aa).

Residues Tyr39, 64 to 66 (GCS), 89 to 90 (DN), 117 to 118 (DI), Asn132, and Arg199 contribute to the S-adenosyl-L-methionine site.

It belongs to the class I-like SAM-binding methyltransferase superfamily. Cx-SAM synthase family. In terms of assembly, homodimer.

The enzyme catalyses prephenate + S-adenosyl-L-methionine = carboxy-S-adenosyl-L-methionine + 3-phenylpyruvate + H2O. Catalyzes the conversion of S-adenosyl-L-methionine (SAM) to carboxy-S-adenosyl-L-methionine (Cx-SAM). This chain is Carboxy-S-adenosyl-L-methionine synthase, found in Klebsiella pneumoniae subsp. pneumoniae (strain ATCC 700721 / MGH 78578).